A 178-amino-acid chain; its full sequence is Adenine phosphoribosyltransferase (178 aa).

This sequence belongs to the purine/pyrimidine phosphoribosyltransferase family. As to quaternary structure, homodimer.

It is found in the cytoplasm. It carries out the reaction AMP + diphosphate = 5-phospho-alpha-D-ribose 1-diphosphate + adenine. Its pathway is purine metabolism; AMP biosynthesis via salvage pathway; AMP from adenine: step 1/1. Catalyzes a salvage reaction resulting in the formation of AMP, that is energically less costly than de novo synthesis. The sequence is that of Adenine phosphoribosyltransferase from Cereibacter sphaeroides (strain ATCC 17029 / ATH 2.4.9) (Rhodobacter sphaeroides).